We begin with the raw amino-acid sequence, 446 residues long: Tubulin beta-2 chain (446 aa).

8 residues coordinate GTP: Gln-11, Glu-69, Ser-138, Gly-142, Thr-143, Gly-144, Asn-204, and Asn-226. Glu-69 is a Mg(2+) binding site. The tract at residues 424 to 446 is disordered; it reads QYQEATADEEGEFDEDEEGGGDE. A compositionally biased stretch (acidic residues) spans 429 to 446; the sequence is TADEEGEFDEDEEGGGDE.

Belongs to the tubulin family. Dimer of alpha and beta chains. A typical microtubule is a hollow water-filled tube with an outer diameter of 25 nm and an inner diameter of 15 nM. Alpha-beta heterodimers associate head-to-tail to form protofilaments running lengthwise along the microtubule wall with the beta-tubulin subunit facing the microtubule plus end conferring a structural polarity. Microtubules usually have 13 protofilaments but different protofilament numbers can be found in some organisms and specialized cells. Requires Mg(2+) as cofactor. As to expression, testis specific.

It localises to the cytoplasm. Its subcellular location is the cytoskeleton. In terms of biological role, tubulin is the major constituent of microtubules, a cylinder consisting of laterally associated linear protofilaments composed of alpha- and beta-tubulin heterodimers. Microtubules grow by the addition of GTP-tubulin dimers to the microtubule end, where a stabilizing cap forms. Below the cap, tubulin dimers are in GDP-bound state, owing to GTPase activity of alpha-tubulin. This chain is Tubulin beta-2 chain (betaTub85D), found in Drosophila melanogaster (Fruit fly).